The chain runs to 754 residues: ToMV susceptible protein tm-1(GCR26) (754 aa).

The interval 1–201 (MATAQSNSPR…AGMVIGRLES (201 aa)) is N-terminal inhibitory domain NN. ATP contacts are provided by residues 18 to 20 (DTK), threonine 55, arginine 92, and 124 to 127 (GSGG). The N-terminal inhibitory domain NC stretch occupies residues 211-431 (KFTVGVTMFG…VDSFLEMSPK (221 aa)).

This sequence belongs to the UPF0261 family. Homodimer. In terms of assembly, (Microbial infection) Binds, via an ATP bridge, to the tobamoviruses avirulent (Avr) replication proteins (large and small subunits, e.g. tobacco mild green mosaic virus (TMGMV) AC P18339 and pepper mild mottle virus (PMMoV) AC P89657) to inhibit their function after the translation of tobamoviruses RNA, but before the viral replication complex formation on the membrane surfaces; this interaction is not possible with resistance-breaking strains replication proteins.

Inhibitor of viral RNA replication which confers resistance to some tobamoviruses including tobacco mild green mosaic virus (TMGMV) and pepper mild mottle virus (PMMoV), but not to tomato mosaic virus (ToMV strains L, ToMV0 and ToMV1-2) and tobacco mosaic virus (TMV). Prevents tobamoviruses RNA replication by affecting the association of tobamoviruses replication proteins (large and small subunits) with host membrane-associated proteins (e.g. TOM1, TOM2A and ARL8), thus inhibiting the replication complex formation on the membranes and avoiding viral negative-strand RNA synthesis. In Solanum lycopersicum (Tomato), this protein is ToMV susceptible protein tm-1(GCR26).